The primary structure comprises 261 residues: MTHQTHAYHMVNPSPWPLTGALSALLMTSGLIMWFHFNSVALLMLGLTTNMLTMYQWWRDVIRESTFQGHHTPNVQKGLRYGMILFIISEVLFFTGFFWAFYHSSLAPTPELGGCWPPTGIHPLNPLEVPLLNTSVLLASGVSITWAHHSLMEGNRNHMLQALFITIALGVYFTLLQASEYYEAPFTISDGVYGSTFFVATGFHGLHVIIGSTFLIVCFFRQLKFHFTSSHHFGFEAAAWYWHFVDVVWLFLYVSIYWWGS.

Topologically, residues 1-15 are mitochondrial matrix; it reads MTHQTHAYHMVNPSP. The chain crosses the membrane as a helical span at residues 16 to 34; the sequence is WPLTGALSALLMTSGLIMW. The Mitochondrial intermembrane segment spans residues 35 to 40; the sequence is FHFNSV. Residues 41–66 traverse the membrane as a helical segment; that stretch reads ALLMLGLTTNMLTMYQWWRDVIREST. The Mitochondrial matrix segment spans residues 67 to 72; that stretch reads FQGHHT. A helical membrane pass occupies residues 73-105; that stretch reads PNVQKGLRYGMILFIISEVLFFTGFFWAFYHSS. The Mitochondrial intermembrane portion of the chain corresponds to 106-128; the sequence is LAPTPELGGCWPPTGIHPLNPLE. The helical transmembrane segment at 129–152 threads the bilayer; the sequence is VPLLNTSVLLASGVSITWAHHSLM. Over 153-155 the chain is Mitochondrial matrix; sequence EGN. The helical transmembrane segment at 156–183 threads the bilayer; the sequence is RNHMLQALFITIALGVYFTLLQASEYYE. The Mitochondrial intermembrane portion of the chain corresponds to 184–190; it reads APFTISD. A helical membrane pass occupies residues 191–223; the sequence is GVYGSTFFVATGFHGLHVIIGSTFLIVCFFRQL. The Mitochondrial matrix segment spans residues 224–232; that stretch reads KFHFTSSHH. The chain crosses the membrane as a helical span at residues 233–256; sequence FGFEAAAWYWHFVDVVWLFLYVSI. Residues 257–261 lie on the Mitochondrial intermembrane side of the membrane; the sequence is YWWGS.

It belongs to the cytochrome c oxidase subunit 3 family. In terms of assembly, component of the cytochrome c oxidase (complex IV, CIV), a multisubunit enzyme composed of 14 subunits. The complex is composed of a catalytic core of 3 subunits MT-CO1, MT-CO2 and MT-CO3, encoded in the mitochondrial DNA, and 11 supernumerary subunits COX4I, COX5A, COX5B, COX6A, COX6B, COX6C, COX7A, COX7B, COX7C, COX8 and NDUFA4, which are encoded in the nuclear genome. The complex exists as a monomer or a dimer and forms supercomplexes (SCs) in the inner mitochondrial membrane with NADH-ubiquinone oxidoreductase (complex I, CI) and ubiquinol-cytochrome c oxidoreductase (cytochrome b-c1 complex, complex III, CIII), resulting in different assemblies (supercomplex SCI(1)III(2)IV(1) and megacomplex MCI(2)III(2)IV(2)).

It is found in the mitochondrion inner membrane. It catalyses the reaction 4 Fe(II)-[cytochrome c] + O2 + 8 H(+)(in) = 4 Fe(III)-[cytochrome c] + 2 H2O + 4 H(+)(out). Its function is as follows. Component of the cytochrome c oxidase, the last enzyme in the mitochondrial electron transport chain which drives oxidative phosphorylation. The respiratory chain contains 3 multisubunit complexes succinate dehydrogenase (complex II, CII), ubiquinol-cytochrome c oxidoreductase (cytochrome b-c1 complex, complex III, CIII) and cytochrome c oxidase (complex IV, CIV), that cooperate to transfer electrons derived from NADH and succinate to molecular oxygen, creating an electrochemical gradient over the inner membrane that drives transmembrane transport and the ATP synthase. Cytochrome c oxidase is the component of the respiratory chain that catalyzes the reduction of oxygen to water. Electrons originating from reduced cytochrome c in the intermembrane space (IMS) are transferred via the dinuclear copper A center (CU(A)) of subunit 2 and heme A of subunit 1 to the active site in subunit 1, a binuclear center (BNC) formed by heme A3 and copper B (CU(B)). The BNC reduces molecular oxygen to 2 water molecules using 4 electrons from cytochrome c in the IMS and 4 protons from the mitochondrial matrix. This is Cytochrome c oxidase subunit 3 (MT-CO3) from Nanger granti (Grant's gazelle).